The primary structure comprises 552 residues: Lysine--tRNA ligase (552 aa).

A 'HIGH' region motif is present at residues 71 to 79 (PSGLPHLGT). The short motif at 319-323 (KISKS) is the 'KMSKS' region element. K322 lines the ATP pocket.

This sequence belongs to the class-I aminoacyl-tRNA synthetase family.

The protein resides in the cytoplasm. The enzyme catalyses tRNA(Lys) + L-lysine + ATP = L-lysyl-tRNA(Lys) + AMP + diphosphate. This is Lysine--tRNA ligase from Caulobacter sp. (strain K31).